The primary structure comprises 387 residues: Putative odorant receptor 19b (387 aa).

The Cytoplasmic segment spans residues 1-40 (MDISKVDSTRALVNHWRIFRIMGIHPPGKRTFWGRHYTAY). A helical transmembrane segment spans residues 41-61 (SMVWNVTFHICIWVSFSVNLL). The Extracellular portion of the chain corresponds to 62 to 71 (QSNSLETFCE). The chain crosses the membrane as a helical span at residues 72 to 92 (SLCVTMPHTLYMLKLINVRRM). The Cytoplasmic segment spans residues 93 to 127 (RGEMISSHWLLRLLDKRLGCADERQIIMAGIERAE). Residues 128–148 (FIFRTIFRGLACTVVLGIIYI) form a helical membrane-spanning segment. At 149 to 171 (SASSEPTLMYPTWIPWNWKDSTS) the chain is on the extracellular side. Residues 172–192 (AYLATAMLHTTALMANATLVL) traverse the membrane as a helical segment. Residues 193 to 254 (NLSSYPGTYL…LRLFKSLERS (62 aa)) lie on the Cytoplasmic side of the membrane. Residues 255–275 (LSMTCFLQFFSTACAQCTICY) form a helical membrane-spanning segment. Residues 276 to 285 (FLLFGNVGIM) lie on the Extracellular side of the membrane. A helical membrane pass occupies residues 286 to 306 (RFMNMLFLLVILTTETLLLCY). The Cytoplasmic portion of the chain corresponds to 307–336 (TAELPCKEGESLLTAVYSCNWLSQSVNFRR). Residues 337–357 (LLLLMLARCQIPMILVSGVIV) form a helical membrane-spanning segment. The Extracellular segment spans residues 358–387 (PISMKTFTVMIKGAYTMLTLLNEIRKTSLE).

The protein belongs to the insect chemoreceptor superfamily. Heteromeric odorant receptor channel (TC 1.A.69) family. Or2a subfamily. In terms of assembly, interacts with Orco. Complexes exist early in the endomembrane system in olfactory sensory neurons (OSNs), coupling these complexes to the conserved ciliary trafficking pathway.

Its subcellular location is the cell membrane. Odorant receptor which mediates acceptance or avoidance behavior, depending on its substrates. The odorant receptor repertoire encodes a large collection of odor stimuli that vary widely in identity, intensity, and duration. May form a complex with Orco to form odorant-sensing units, providing sensitive and prolonged odorant signaling and calcium permeability. The polypeptide is Putative odorant receptor 19b (Drosophila melanogaster (Fruit fly)).